The primary structure comprises 685 residues: Threonine--tRNA ligase (685 aa).

The TGS domain maps to methionine 1 to alanine 65. A catalytic region spans residues aspartate 262 to proline 568. Cysteine 367, histidine 418, and histidine 545 together coordinate Zn(2+).

The protein belongs to the class-II aminoacyl-tRNA synthetase family. As to quaternary structure, homodimer. Requires Zn(2+) as cofactor.

Its subcellular location is the cytoplasm. The catalysed reaction is tRNA(Thr) + L-threonine + ATP = L-threonyl-tRNA(Thr) + AMP + diphosphate + H(+). In terms of biological role, catalyzes the attachment of threonine to tRNA(Thr) in a two-step reaction: L-threonine is first activated by ATP to form Thr-AMP and then transferred to the acceptor end of tRNA(Thr). Also edits incorrectly charged L-seryl-tRNA(Thr). The chain is Threonine--tRNA ligase from Rhodococcus jostii (strain RHA1).